A 63-amino-acid chain; its full sequence is Large ribosomal subunit protein bL32 (63 aa).

Residues 1–27 (MANPKAKMSKSRRDKRRAQFNARTKPA) are disordered. Over residues 7 to 18 (KMSKSRRDKRRA) the composition is skewed to basic residues.

This sequence belongs to the bacterial ribosomal protein bL32 family.

The polypeptide is Large ribosomal subunit protein bL32 (Pelodictyon phaeoclathratiforme (strain DSM 5477 / BU-1)).